Reading from the N-terminus, the 350-residue chain is Dihydroorotase (350 aa).

The Zn(2+) site is built by His-17 and His-19. Substrate-binding positions include 19–21 (HFR) and Asn-45. Residues Lys-103, His-140, and His-178 each coordinate Zn(2+). At Lys-103 the chain carries N6-carboxylysine. His-140 contributes to the substrate binding site. Leu-223 serves as a coordination point for substrate. Asp-251 serves as a coordination point for Zn(2+). Residue Asp-251 is part of the active site. The substrate site is built by His-255 and Ala-267.

It belongs to the metallo-dependent hydrolases superfamily. DHOase family. Class II DHOase subfamily. As to quaternary structure, homodimer. The cofactor is Zn(2+).

It carries out the reaction (S)-dihydroorotate + H2O = N-carbamoyl-L-aspartate + H(+). The protein operates within pyrimidine metabolism; UMP biosynthesis via de novo pathway; (S)-dihydroorotate from bicarbonate: step 3/3. Catalyzes the reversible cyclization of carbamoyl aspartate to dihydroorotate. The chain is Dihydroorotase from Photorhabdus laumondii subsp. laumondii (strain DSM 15139 / CIP 105565 / TT01) (Photorhabdus luminescens subsp. laumondii).